A 201-amino-acid chain; its full sequence is MQPFIAHTGLAVIIDSANVDTDQIIPKQFLSKVTRDGFGIHLFHDWRYLDDAGDQPNPDFNLNKPRYKGASILVSQENFGCGSSREHAPWALADFGLKAIIAPSFADIFYGNSINNGLLPVKLTEAEVEQIMAEVEALPGADVTVDLQALTVTSPSGSVFSFEIAESARHNLLNGLDAIGLTLAHGDAISHYEANLPAWRA.

Belongs to the LeuD family. LeuD type 1 subfamily. In terms of assembly, heterodimer of LeuC and LeuD.

The catalysed reaction is (2R,3S)-3-isopropylmalate = (2S)-2-isopropylmalate. The protein operates within amino-acid biosynthesis; L-leucine biosynthesis; L-leucine from 3-methyl-2-oxobutanoate: step 2/4. Its function is as follows. Catalyzes the isomerization between 2-isopropylmalate and 3-isopropylmalate, via the formation of 2-isopropylmaleate. The protein is 3-isopropylmalate dehydratase small subunit of Shewanella piezotolerans (strain WP3 / JCM 13877).